We begin with the raw amino-acid sequence, 39 residues long: Cytochrome b559 subunit beta (39 aa).

The helical transmembrane segment at 14 to 30 (WLAIHGLAVPTVFFLGS) threads the bilayer. His-18 provides a ligand contact to heme.

Heterodimer of an alpha subunit and a beta subunit. PSII is composed of 1 copy each of membrane proteins PsbA, PsbB, PsbC, PsbD, PsbE, PsbF, PsbH, PsbI, PsbJ, PsbK, PsbL, PsbM, PsbT, PsbX, PsbY, PsbZ, Psb30/Ycf12, at least 3 peripheral proteins of the oxygen-evolving complex and a large number of cofactors. It forms dimeric complexes. The cofactor is heme b. In terms of processing, the N-terminus is blocked.

The protein localises to the plastid. The protein resides in the chloroplast thylakoid membrane. Functionally, this b-type cytochrome is tightly associated with the reaction center of photosystem II (PSII). PSII is a light-driven water:plastoquinone oxidoreductase that uses light energy to abstract electrons from H(2)O, generating O(2) and a proton gradient subsequently used for ATP formation. It consists of a core antenna complex that captures photons, and an electron transfer chain that converts photonic excitation into a charge separation. In Spinacia oleracea (Spinach), this protein is Cytochrome b559 subunit beta.